Here is a 102-residue protein sequence, read N- to C-terminus: Small ribosomal subunit protein uS10 (102 aa).

Belongs to the universal ribosomal protein uS10 family. In terms of assembly, part of the 30S ribosomal subunit.

Its function is as follows. Involved in the binding of tRNA to the ribosomes. In Beijerinckia indica subsp. indica (strain ATCC 9039 / DSM 1715 / NCIMB 8712), this protein is Small ribosomal subunit protein uS10.